A 118-amino-acid chain; its full sequence is uncharacterized protein (118 aa).

Residues 7–27 form a helical membrane-spanning segment; that stretch reads LLTGLFVGGIIGGAAVLLTAP. A coiled-coil region spans residues 31–118; it reads KQLREKMKTN…IRQLEKTLQN (88 aa).

Its subcellular location is the cell membrane. This is an uncharacterized protein from Bacillus subtilis (strain 168).